A 258-amino-acid polypeptide reads, in one-letter code: Type III pantothenate kinase (258 aa).

6-13 (DVGNTNIV) lines the ATP pocket. Residues Tyr-100 and 107-110 (GADR) each bind substrate. Asp-109 functions as the Proton acceptor in the catalytic mechanism. Residue Asp-129 coordinates K(+). Thr-132 contacts ATP. Thr-184 contacts substrate.

This sequence belongs to the type III pantothenate kinase family. In terms of assembly, homodimer. It depends on NH4(+) as a cofactor. K(+) is required as a cofactor.

The protein localises to the cytoplasm. The catalysed reaction is (R)-pantothenate + ATP = (R)-4'-phosphopantothenate + ADP + H(+). It functions in the pathway cofactor biosynthesis; coenzyme A biosynthesis; CoA from (R)-pantothenate: step 1/5. Functionally, catalyzes the phosphorylation of pantothenate (Pan), the first step in CoA biosynthesis. The polypeptide is Type III pantothenate kinase (Desulfitobacterium hafniense (strain DSM 10664 / DCB-2)).